A 111-amino-acid chain; its full sequence is U-scoloptoxin(16)-Er8a (111 aa).

The N-terminal stretch at 1 to 26 is a signal peptide; it reads MTSTRKLSVSCLIVFMVSSLIAVSSG.

Belongs to the scoloptoxin-16 family. Post-translationally, contains 4 disulfide bonds. As to expression, expressed by the venom gland.

Its subcellular location is the secreted. This chain is U-scoloptoxin(16)-Er8a, found in Ethmostigmus rubripes (Giant centipede).